Here is a 956-residue protein sequence, read N- to C-terminus: Plasma membrane ATPase 3 (956 aa).

Topologically, residues 1-65 (MGEKPEVLDA…EKKESKFSKF (65 aa)) are cytoplasmic. Residues 66-85 (LGFMWNPLSWVMEAAAIMAI) traverse the membrane as a helical segment. Residues 86-97 (ALANGGGKPPDW) lie on the Extracellular side of the membrane. A helical membrane pass occupies residues 98-118 (QDFVGIITLLIINSTISFIEE). Over 119–247 (NNAGNAAAAL…GHFQKVLTAI (129 aa)) the chain is Cytoplasmic. A helical membrane pass occupies residues 248–268 (GNFCICSIAVGMIIEIIVMYP). At 269–278 (IQHRKYRPGI) the chain is on the extracellular side. Residues 279–300 (DNLLVLLIGGIPIAMPTVLSVT) traverse the membrane as a helical segment. The Cytoplasmic portion of the chain corresponds to 301–647 (MAIGSHRLAQ…TSRAIFQRMK (347 aa)). The 4-aspartylphosphate intermediate role is filled by aspartate 333. 2 residues coordinate Mg(2+): aspartate 592 and aspartate 596. The helical transmembrane segment at 648-669 (NYTIYAVSITIRIVLGFMLLAL) threads the bilayer. Residues 670 to 674 (IWQFD) are Extracellular-facing. A helical transmembrane segment spans residues 675-697 (FPPFMVLIIAILNDGTIMTISKD). Residues 698-713 (RVKPSPLPDSWKLAEI) are Cytoplasmic-facing. The helical transmembrane segment at 714–734 (FTTGVVLGGYLAMMTVIFFWA) threads the bilayer. Residues 735–759 (AYKTNFFPRVFGVSTLEKTATDDFR) lie on the Extracellular side of the membrane. Residues 760-780 (KLASAIYLQVSTISQALIFVT) form a helical membrane-spanning segment. Over 781 to 792 (RSRSWSFMERPG) the chain is Cytoplasmic. A helical membrane pass occupies residues 793–813 (LLLVVAFFIAQLVATLIAVYA). Residues 814 to 822 (NWSFAAIEG) are Extracellular-facing. A helical transmembrane segment spans residues 823 to 843 (IGWGWAGVIWLYNIVFYIPLD). Residues 844–956 (LXXFLIRYAL…IETIQQAYTV (113 aa)) are Cytoplasmic-facing.

Belongs to the cation transport ATPase (P-type) (TC 3.A.3) family. Type IIIA subfamily. As to expression, expressed in roots, stems, leaves from both vegetative and flowering plants, and flowers at early and late stages of development with highest expression levels found in flowers and root tissue.

It is found in the cell membrane. It carries out the reaction ATP + H2O + H(+)(in) = ADP + phosphate + 2 H(+)(out). Its function is as follows. The plasma membrane ATPase of plants and fungi is a hydrogen ion pump. The proton gradient it generates drives the active transport of nutrients by H(+)-symport. The resulting external acidification and/or internal alkinization may mediate growth responses. This is Plasma membrane ATPase 3 (PMA3) from Nicotiana plumbaginifolia (Leadwort-leaved tobacco).